A 70-amino-acid chain; its full sequence is Probable non-specific lipid-transfer protein 2 (70 aa).

Intrachain disulfides connect cysteine 4-cysteine 38, cysteine 12-cysteine 26, cysteine 27-cysteine 62, and cysteine 36-cysteine 69.

In terms of biological role, potential phospholipid transfer protein. The protein is Probable non-specific lipid-transfer protein 2 of Zea mays (Maize).